Here is an 875-residue protein sequence, read N- to C-terminus: Alanine--tRNA ligase (875 aa).

Residues His-564, His-568, Cys-666, and His-670 each contribute to the Zn(2+) site.

The protein belongs to the class-II aminoacyl-tRNA synthetase family. As to quaternary structure, homotetramer. It depends on Zn(2+) as a cofactor.

Its subcellular location is the cytoplasm. The catalysed reaction is tRNA(Ala) + L-alanine + ATP = L-alanyl-tRNA(Ala) + AMP + diphosphate. Its function is as follows. Catalyzes the attachment of alanine to tRNA(Ala) in a two-step reaction: alanine is first activated by ATP to form Ala-AMP and then transferred to the acceptor end of tRNA(Ala). Also edits incorrectly charged Ser-tRNA(Ala) and Gly-tRNA(Ala) via its editing domain. The chain is Alanine--tRNA ligase from Enterobacter sp. (strain 638).